We begin with the raw amino-acid sequence, 169 residues long: Cyclic pyranopterin monophosphate synthase (169 aa).

Residues 83–85 (LCH) and 121–122 (ME) each bind substrate. Residue Asp-136 is part of the active site.

Belongs to the MoaC family. As to quaternary structure, homohexamer; trimer of dimers.

The catalysed reaction is (8S)-3',8-cyclo-7,8-dihydroguanosine 5'-triphosphate = cyclic pyranopterin phosphate + diphosphate. It functions in the pathway cofactor biosynthesis; molybdopterin biosynthesis. Catalyzes the conversion of (8S)-3',8-cyclo-7,8-dihydroguanosine 5'-triphosphate to cyclic pyranopterin monophosphate (cPMP). The polypeptide is Cyclic pyranopterin monophosphate synthase (Rhodospirillum centenum (strain ATCC 51521 / SW)).